Reading from the N-terminus, the 1230-residue chain is DNA-directed RNA polymerase, mitochondrial (1230 aa).

Residues 1 to 41 (MSALCWGRGAAGLKRALRPCGRPGLPGKEGTAGGVCGPRRS) constitute a mitochondrion transit peptide. Disordered stretches follow at residues 18–55 (RPCGRPGLPGKEGTAGGVCGPRRSSSASPQEQDQDRRK), 95–115 (GSGDGSLQPPRKVQMGAKDAT), and 731–750 (VPAPPSEAPQPPEAHLPHSA). The span at 732–744 (PAPPSEAPQPPEA) shows a compositional bias: pro residues. Residues 802–1230 (FRGRTYPCPP…QVKRSTYFFS (429 aa)) are mediates interaction with TEFM. Residues aspartate 922, lysine 991, and aspartate 1151 contribute to the active site.

Belongs to the phage and mitochondrial RNA polymerase family. Homodimer. Component of the mitochondrial transcription initiation complex, composed at least of TFB2M, TFAM and POLRMT. In this complex TFAM recruits POLRMT to the promoter whereas TFB2M induces structural changes in POLRMT to enable promoter opening and trapping of the DNA non-template strand. Upon metabolic stress, forms a complex composed of FOXO3, SIRT3 and mitochondrial RNA polymerase POLRMT; the complex is recruited to mtDNA in a SIRT3-dependent manner. Also forms a complex composed of FOXO3, SIRT3, TFAM and POLRMT. Interacts with TFB1M and TFB2M, leading to the stimulation of transcription. Interacts with TEFM. Interacts with MTRES1.

The protein resides in the mitochondrion. The catalysed reaction is RNA(n) + a ribonucleoside 5'-triphosphate = RNA(n+1) + diphosphate. In terms of biological role, DNA-dependent RNA polymerase catalyzes the transcription of mitochondrial DNA into RNA using the four ribonucleoside triphosphates as substrates. Component of the mitochondrial transcription initiation complex, composed at least of TFB2M, TFAM and POLRMT that is required for basal transcription of mitochondrial DNA. In this complex, TFAM recruits POLRMT to a specific promoter whereas TFB2M induces structural changes in POLRMT to enable promoter opening and trapping of the DNA non-template strand. Has DNA primase activity. Catalyzes the synthesis of short RNA primers that are necessary for the initiation of lagging-strand DNA synthesis from the origin of light-strand DNA replication (OriL). In Homo sapiens (Human), this protein is DNA-directed RNA polymerase, mitochondrial.